The primary structure comprises 638 residues: Threonine--tRNA ligase 2 (638 aa).

The TGS domain occupies 1-64; that stretch reads MSKHVHIQLP…EEDAELSIVT (64 aa). The catalytic stretch occupies residues 245–535; that stretch reads DHRKLGKQLG…LIEHYGGAFP (291 aa). Residues C336, H387, and H512 each coordinate Zn(2+).

This sequence belongs to the class-II aminoacyl-tRNA synthetase family. In terms of assembly, homodimer. Requires Zn(2+) as cofactor.

It is found in the cytoplasm. It carries out the reaction tRNA(Thr) + L-threonine + ATP = L-threonyl-tRNA(Thr) + AMP + diphosphate + H(+). Functionally, catalyzes the attachment of threonine to tRNA(Thr) in a two-step reaction: L-threonine is first activated by ATP to form Thr-AMP and then transferred to the acceptor end of tRNA(Thr). Also edits incorrectly charged L-seryl-tRNA(Thr). In Bacillus subtilis (strain 168), this protein is Threonine--tRNA ligase 2 (thrZ).